Here is a 319-residue protein sequence, read N- to C-terminus: Cobalamin biosynthesis protein CbiB (319 aa).

The next 5 membrane-spanning stretches (helical) occupy residues I52 to A74, I79 to L101, G155 to V177, Y207 to W229, and L296 to V318.

Belongs to the CobD/CbiB family.

It is found in the cell membrane. The protein operates within cofactor biosynthesis; adenosylcobalamin biosynthesis; adenosylcobalamin from cob(II)yrinate a,c-diamide: step 4/7. Functionally, converts cobyric acid to cobinamide by the addition of aminopropanol on the F carboxylic group. However, the true cosubstrate could be (R)-1-amino-2-propanol O-2-phosphate, leading to cobinamide phosphate. This is Cobalamin biosynthesis protein CbiB from Salmonella typhi.